The chain runs to 933 residues: Phospholipase SGR2 (933 aa).

A compositionally biased stretch (basic and acidic residues) spans 1 to 14 (MEDRETHLGTREVN). A disordered region spans residues 1 to 22 (MEDRETHLGTREVNETSPDLLK). Residue Ser444 is part of the active site. 2 disordered regions span residues 475-517 (PDEE…GQDN) and 553-598 (RGGQ…ESVN). Over residues 505-517 (QLNNPEKITGQDN) the composition is skewed to polar residues. Over residues 553–563 (RGGQEDDHHDS) the composition is skewed to basic and acidic residues. A coiled-coil region spans residues 593-631 (DKESVNSNNEERIKLLQDEVNSLRSKVAQLLSENARILS). Residues 669-868 (LEFKVDTFFA…ALFIIKHLYR (200 aa)) form the DDHD domain. The tract at residues 871–903 (PDGPNSPTESTEGDDSPKDSSRPHSWIDRREAD) is disordered. Positions 885 to 902 (DSPKDSSRPHSWIDRREA) are enriched in basic and acidic residues.

As to quaternary structure, forms oligomers. As to expression, expressed in roots, hypocotyls, leaves, stems and floral buds, and, at low levels, in siliques.

Its subcellular location is the vacuole membrane. Its function is as follows. Involved in vacuolar formation or function (e.g. formation of vacuolar membrane 'bulbs'). Required for amyloplast sedimentation in the endodermis during shoot gravitropism, which are thus acting as statoliths. Particularly important for the negative gravitropism leading to leaf movement observed in darkness. The polypeptide is Phospholipase SGR2 (SGR2) (Arabidopsis thaliana (Mouse-ear cress)).